Consider the following 414-residue polypeptide: Tryptophan synthase beta chain (414 aa).

A disordered region spans residues 1–26 (MVSTFSRQDQNYKNDDLNQPSKEGRF). The segment covering 10 to 26 (QNYKNDDLNQPSKEGRF) has biased composition (basic and acidic residues). Lysine 109 carries the N6-(pyridoxal phosphate)lysine modification.

It belongs to the TrpB family. Tetramer of two alpha and two beta chains. It depends on pyridoxal 5'-phosphate as a cofactor.

It catalyses the reaction (1S,2R)-1-C-(indol-3-yl)glycerol 3-phosphate + L-serine = D-glyceraldehyde 3-phosphate + L-tryptophan + H2O. It participates in amino-acid biosynthesis; L-tryptophan biosynthesis; L-tryptophan from chorismate: step 5/5. In terms of biological role, the beta subunit is responsible for the synthesis of L-tryptophan from indole and L-serine. The sequence is that of Tryptophan synthase beta chain from Prochlorococcus marinus (strain MIT 9312).